Consider the following 199-residue polypeptide: dTTP/UTP pyrophosphatase (199 aa).

D75 acts as the Proton acceptor in catalysis.

Belongs to the Maf family. YhdE subfamily. Requires a divalent metal cation as cofactor.

The protein resides in the cytoplasm. It carries out the reaction dTTP + H2O = dTMP + diphosphate + H(+). The catalysed reaction is UTP + H2O = UMP + diphosphate + H(+). Its function is as follows. Nucleoside triphosphate pyrophosphatase that hydrolyzes dTTP and UTP. May have a dual role in cell division arrest and in preventing the incorporation of modified nucleotides into cellular nucleic acids. The sequence is that of dTTP/UTP pyrophosphatase from Methylobacillus flagellatus (strain ATCC 51484 / DSM 6875 / VKM B-1610 / KT).